The following is a 118-amino-acid chain: Small ribosomal subunit protein uS13 (118 aa).

The segment at 91-118 (HRRSLPVRGQRTKTNARTRKGPRKPIKA) is disordered.

Belongs to the universal ribosomal protein uS13 family. As to quaternary structure, part of the 30S ribosomal subunit. Forms a loose heterodimer with protein S19. Forms two bridges to the 50S subunit in the 70S ribosome.

Functionally, located at the top of the head of the 30S subunit, it contacts several helices of the 16S rRNA. In the 70S ribosome it contacts the 23S rRNA (bridge B1a) and protein L5 of the 50S subunit (bridge B1b), connecting the 2 subunits; these bridges are implicated in subunit movement. Contacts the tRNAs in the A and P-sites. This chain is Small ribosomal subunit protein uS13, found in Francisella philomiragia subsp. philomiragia (strain ATCC 25017 / CCUG 19701 / FSC 153 / O#319-036).